We begin with the raw amino-acid sequence, 552 residues long: 5'-AMP-activated protein kinase catalytic subunit alpha-2 (552 aa).

The Protein kinase domain maps to 16–268 (YVLGDTLGVG…IKDIREHEWF (253 aa)). ATP-binding positions include 22 to 30 (LGVGTFGKV) and lysine 45. Catalysis depends on aspartate 139, which acts as the Proton acceptor. Phosphothreonine; by LKB1 and CaMKK2 is present on threonine 172. A Phosphothreonine modification is found at threonine 258. An AIS region spans residues 291–376 (EAVKEVCEKF…PERMPPLIAD (86 aa)). A Phosphoserine modification is found at serine 377. The tract at residues 478–519 (EQRSGSSTPQRSCSAAGLHRPRSSLDSVTAESHSLSGSLSGS) is disordered. Over residues 480 to 490 (RSGSSTPQRSC) the composition is skewed to polar residues. Serine 491 is modified (phosphoserine). Residues 509-519 (SHSLSGSLSGS) show a composition bias toward low complexity.

The protein belongs to the protein kinase superfamily. CAMK Ser/Thr protein kinase family. SNF1 subfamily. As to quaternary structure, AMPK is a heterotrimer of an alpha catalytic subunit (PRKAA1 or PRKAA2), a beta (PRKAB1 or PRKAB2) and a gamma non-catalytic subunits (PRKAG1, PRKAG2 or PRKAG3). Interacts with FNIP1 and FNIP2. Interacts with DUSP29. Interacts with ARF6. The phosphorylated form at Thr-172 mediated by CamKK2 interacts with ACSS2. It depends on Mg(2+) as a cofactor. Ubiquitinated. Post-translationally, phosphorylated at Thr-172 by STK11/LKB1 in complex with STE20-related adapter-alpha (STRADA) pseudo kinase and CAB39. Also phosphorylated at Thr-172 by CAMKK2; triggered by a rise in intracellular calcium ions, without detectable changes in the AMP/ATP ratio. CAMKK1 can also phosphorylate Thr-172, but at much lower level. Dephosphorylated by protein phosphatase 2A and 2C (PP2A and PP2C). Phosphorylated by ULK1; leading to negatively regulate AMPK activity and suggesting the existence of a regulatory feedback loop between ULK1 and AMPK. Dephosphorylated by PPM1A and PPM1B at Thr-172 (mediated by STK11/LKB1).

Its subcellular location is the cytoplasm. It localises to the nucleus. It carries out the reaction L-seryl-[protein] + ATP = O-phospho-L-seryl-[protein] + ADP + H(+). It catalyses the reaction L-threonyl-[protein] + ATP = O-phospho-L-threonyl-[protein] + ADP + H(+). The enzyme catalyses L-seryl-[acetyl-CoA carboxylase] + ATP = O-phospho-L-seryl-[acetyl-CoA carboxylase] + ADP + H(+). The catalysed reaction is L-seryl-[3-hydroxy-3-methylglutaryl-coenzyme A reductase] + ATP = O-phospho-L-seryl-[3-hydroxy-3-methylglutaryl-coenzyme A reductase] + ADP + H(+). Activated by phosphorylation on Thr-172. Binding of AMP to non-catalytic gamma subunit (PRKAG1, PRKAG2 or PRKAG3) results in allosteric activation, inducing phosphorylation on Thr-172. AMP-binding to gamma subunit also sustains activity by preventing dephosphorylation of Thr-172. ADP also stimulates Thr-172 phosphorylation, without stimulating already phosphorylated AMPK. ATP promotes dephosphorylation of Thr-172, rendering the enzyme inactive. Under physiological conditions AMPK mainly exists in its inactive form in complex with ATP, which is much more abundant than AMP. Selectively inhibited by compound C (6-[4-(2-Piperidin-1-yl-ethoxy)-phenyl)]-3-pyridin-4-yl-pyyrazolo[1,5-a] pyrimidine. Activated by resveratrol, a natural polyphenol present in red wine, and S17834, a synthetic polyphenol. Salicylate/aspirin directly activates kinase activity, primarily by inhibiting Thr-172 dephosphorylation. Its function is as follows. Catalytic subunit of AMP-activated protein kinase (AMPK), an energy sensor protein kinase that plays a key role in regulating cellular energy metabolism. In response to reduction of intracellular ATP levels, AMPK activates energy-producing pathways and inhibits energy-consuming processes: inhibits protein, carbohydrate and lipid biosynthesis, as well as cell growth and proliferation. AMPK acts via direct phosphorylation of metabolic enzymes, and by longer-term effects via phosphorylation of transcription regulators. Regulates lipid synthesis by phosphorylating and inactivating lipid metabolic enzymes such as ACACA, ACACB, GYS1, HMGCR and LIPE; regulates fatty acid and cholesterol synthesis by phosphorylating acetyl-CoA carboxylase (ACACA and ACACB) and hormone-sensitive lipase (LIPE) enzymes, respectively. Promotes lipolysis of lipid droplets by mediating phosphorylation of isoform 1 of CHKA (CHKalpha2). Regulates insulin-signaling and glycolysis by phosphorylating IRS1, PFKFB2 and PFKFB3. Involved in insulin receptor/INSR internalization. AMPK stimulates glucose uptake in muscle by increasing the translocation of the glucose transporter SLC2A4/GLUT4 to the plasma membrane, possibly by mediating phosphorylation of TBC1D4/AS160. Regulates transcription and chromatin structure by phosphorylating transcription regulators involved in energy metabolism such as CRTC2/TORC2, FOXO3, histone H2B, HDAC5, MEF2C, MLXIPL/ChREBP, EP300, HNF4A, p53/TP53, SREBF1, SREBF2 and PPARGC1A. Acts as a key regulator of glucose homeostasis in liver by phosphorylating CRTC2/TORC2, leading to CRTC2/TORC2 sequestration in the cytoplasm. In response to stress, phosphorylates 'Ser-36' of histone H2B (H2BS36ph), leading to promote transcription. Acts as a key regulator of cell growth and proliferation by phosphorylating FNIP1, TSC2, RPTOR, WDR24 and ATG1/ULK1: in response to nutrient limitation, negatively regulates the mTORC1 complex by phosphorylating RPTOR component of the mTORC1 complex and by phosphorylating and activating TSC2. Also phosphorylates and inhibits GATOR2 subunit WDR24 in response to nutrient limitation, leading to suppress glucose-mediated mTORC1 activation. In response to energetic stress, phosphorylates FNIP1, inactivating the non-canonical mTORC1 signaling, thereby promoting nuclear translocation of TFEB and TFE3, and inducing transcription of lysosomal or autophagy genes. In response to nutrient limitation, promotes autophagy by phosphorylating and activating ATG1/ULK1. In that process also activates WDR45/WIPI4. Phosphorylates CASP6, thereby preventing its autoprocessing and subsequent activation. AMPK also acts as a regulator of circadian rhythm by mediating phosphorylation of CRY1, leading to destabilize it. May regulate the Wnt signaling pathway by phosphorylating CTNNB1, leading to stabilize it. Also acts as a regulator of cellular polarity by remodeling the actin cytoskeleton; probably by indirectly activating myosin. Also phosphorylates CFTR, EEF2K, KLC1, NOS3 and SLC12A1. Plays an important role in the differential regulation of pro-autophagy (composed of PIK3C3, BECN1, PIK3R4 and UVRAG or ATG14) and non-autophagy (composed of PIK3C3, BECN1 and PIK3R4) complexes, in response to glucose starvation. Can inhibit the non-autophagy complex by phosphorylating PIK3C3 and can activate the pro-autophagy complex by phosphorylating BECN1. Upon glucose starvation, promotes ARF6 activation in a kinase-independent manner leading to cell migration. Upon glucose deprivation mediates the phosphorylation of ACSS2 at 'Ser-659', which exposes the nuclear localization signal of ACSS2, required for its interaction with KPNA1 and nuclear translocation. Upon stress, regulates mitochondrial fragmentation through phosphorylation of MTFR1L. This chain is 5'-AMP-activated protein kinase catalytic subunit alpha-2 (PRKAA2), found in Sus scrofa (Pig).